The chain runs to 610 residues: UvrABC system protein C (610 aa).

Residues 16–94 (SQPGVYRMYD…IKLYQPRYNV (79 aa)) form the GIY-YIG domain. In terms of domain architecture, UVR spans 204-239 (DQVLTQLIARMEKASQSLEFEEAARIRDQIQAVRRV). Residues 540–559 (HAISGHRKKRAKVKSTSSLE) form a disordered region. Residues 543–552 (SGHRKKRAKV) are compositionally biased toward basic residues.

Belongs to the UvrC family. Interacts with UvrB in an incision complex.

The protein resides in the cytoplasm. Its function is as follows. The UvrABC repair system catalyzes the recognition and processing of DNA lesions. UvrC both incises the 5' and 3' sides of the lesion. The N-terminal half is responsible for the 3' incision and the C-terminal half is responsible for the 5' incision. This Klebsiella pneumoniae (strain 342) protein is UvrABC system protein C.